Reading from the N-terminus, the 274-residue chain is Ubiquinone biosynthesis O-methyltransferase, mitochondrial (274 aa).

A mitochondrion-targeting transit peptide spans 1-30; sequence MNSMNILNKVKNVKSYTRLVRQGFLSQQRN. S-adenosyl-L-methionine contacts are provided by Arg65, Gly88, Asp109, and Met154. Residues Glu155, Glu158, and His159 each coordinate Mg(2+).

It belongs to the class I-like SAM-binding methyltransferase superfamily. UbiG/COQ3 family. Component of a multi-subunit COQ enzyme complex, composed of at least coq3, coq4, coq5, coq6, coq7 and coq9. Requires Mg(2+) as cofactor.

The protein resides in the mitochondrion inner membrane. It carries out the reaction 3,4-dihydroxy-5-(all-trans-decaprenyl)benzoate + S-adenosyl-L-methionine = 4-hydroxy-3-methoxy-5-(all-trans-decaprenyl)benzoate + S-adenosyl-L-homocysteine + H(+). The enzyme catalyses a 3-demethylubiquinone + S-adenosyl-L-methionine = a ubiquinone + S-adenosyl-L-homocysteine. The catalysed reaction is 3-demethylubiquinol-10 + S-adenosyl-L-methionine = ubiquinol-10 + S-adenosyl-L-homocysteine + H(+). The protein operates within cofactor biosynthesis; ubiquinone biosynthesis. In terms of biological role, O-methyltransferase required for two non-consecutive steps during ubiquinone biosynthesis. Catalyzes the 2 O-methylation of 3,4-dihydroxy-5-(all-trans-decaprenyl)benzoic acid into 4-hydroxy-3-methoxy-5-(all-trans-decaprenyl)benzoic acid. Also catalyzes the last step of ubiquinone biosynthesis by mediating methylation of 3-demethylubiquinone into ubiquinone. Also able to mediate the methylation of 3-demethylubiquinol-10 into ubiquinol-10. The protein is Ubiquinone biosynthesis O-methyltransferase, mitochondrial of Schizosaccharomyces pombe (strain 972 / ATCC 24843) (Fission yeast).